Reading from the N-terminus, the 340-residue chain is Mitochondrial glycine transporter (340 aa).

Solcar repeat units follow at residues Pro23–Gly108, Leu128–Asp218, and Arg237–Ser325. Transmembrane regions (helical) follow at residues Leu29–Gln54, Gly83–Ile109, Leu134–Glu159, Gly193–Lys216, Ile241–Leu267, and Gly300–Ile318.

Belongs to the mitochondrial carrier (TC 2.A.29) family. SLC25A38 subfamily.

The protein localises to the mitochondrion inner membrane. The catalysed reaction is glycine(in) = glycine(out). In terms of biological role, mitochondrial glycine transporter that imports glycine into the mitochondrial matrix. Plays an important role in providing glycine for the first enzymatic step in heme biosynthesis, the condensation of glycine with succinyl-CoA to produce 5-aminolevulinate (ALA) in the mitochondrial matrix. In Debaryomyces hansenii (strain ATCC 36239 / CBS 767 / BCRC 21394 / JCM 1990 / NBRC 0083 / IGC 2968) (Yeast), this protein is Mitochondrial glycine transporter.